The primary structure comprises 77 residues: Anionic peptide 17.1 (77 aa).

The first 24 residues, 1 to 24 (MASKTVLVLLLVSVLVSTFCTAKA), serve as a signal peptide directing secretion.

It belongs to the non-disulfide-bridged peptide (NDBP) superfamily. Long chain multifunctional peptide (group 2) family. In terms of tissue distribution, expressed by the venom gland.

It is found in the secreted. The chain is Anionic peptide 17.1 from Lychas mucronatus (Chinese swimming scorpion).